The sequence spans 238 residues: Flagellar L-ring protein (238 aa).

An N-terminal signal peptide occupies residues 1 to 17 (MIRKTLAASCAVLLMAG). Residue cysteine 18 is the site of N-palmitoyl cysteine attachment. Cysteine 18 carries S-diacylglycerol cysteine lipidation.

The protein belongs to the FlgH family. In terms of assembly, the basal body constitutes a major portion of the flagellar organelle and consists of four rings (L,P,S, and M) mounted on a central rod.

The protein localises to the cell outer membrane. It is found in the bacterial flagellum basal body. Its function is as follows. Assembles around the rod to form the L-ring and probably protects the motor/basal body from shearing forces during rotation. This Nitratidesulfovibrio vulgaris (strain ATCC 29579 / DSM 644 / CCUG 34227 / NCIMB 8303 / VKM B-1760 / Hildenborough) (Desulfovibrio vulgaris) protein is Flagellar L-ring protein.